The chain runs to 1491 residues: MIERGKYQSLTMINWNGFFARTFDIDNLVTTLSGGNGAGKSTTMAAFITALIPDQSLLHFRNTTEAGSSQASRDKGLYGKLQAGACYAALDVVNSRNQRLLFAVKLQQVAGRDKKVDIKPFLIQGLPSHVKPTDVLVETVSDKHARVRQINEVKDAVGQIEGAHFKSFPSIVDYHAQMFEFGVIPKKLRNSSDRSKFYRLIEASLYGGISSAITRSLRDYLLPQNGGVKKAFQDMESALRENRMTLEAIKTTQADRDLFKHLITESTNYVAADYMRHANDRRNKVGQTLVLRGELFSSRETLIEQNSLLNRVHEELELLVEQESALEQDYQGASDHLQLVQNALRQQEKIERYQEDLEELNFRLEEQMMVVEEANERVMQAEERAIISEEEVDSLKSQLADYQQALDVQQTRALQYQQAVQALDKARRLLDKSELTAESAQALATQLKAEQETRTSELLALKHKLDMSSAAAQQFNHAFELVKRVLGEVARSEAAKQAQQVIRQAREAQNVVQNEAQWQAQQRDLERQLEQQRSVRELATQYHKQHRVVLDDAATVELERERHSALLEELETEQENCREQRGQLRHQEQELQTQIARFESIAPAWIKANDALETLREQSGAELADSQSVMAHMQQVLELEKAQSMAKDKLAERRTKLDSEIERLASPGGSNDPRLKGLADTLGGVLLSEIYDDITIDDAPYFSAMYGPARHAIVVSDLSGIKEKLVELDDCPEDLYLIEGDVDAFDDSSFNAEELEGAVCVQLNQRQMRYSRFPAIPLFGRAAREQRLELLREERDDVVEQHAKASFDSQKLQRLYASFNQFVAMHLQVAFDADPEQALATARDKRNQLLRSISEFEAQEQQLRSQLQASKQALAALDKLAPQMGLLDEETLEARYHELEEKLQQLSEAKAFIAAHGRTISELEKVAAVLDADPEQFDALEQQYQQADQALQQLKAQIFALSDLLERRHHFAYSDSVDLLNQSSELSEQLKAKLVQAESERTRSREELKQAQAQLSQYNQLLASLKSSHQAKLETVQEFKQELQEFGVHADEGAIERAQRRRDELQERLHTSRSRKSEYERTITSTELEMKALVKRMKKVEKDYQDLRTFVVNAKAGWCSVLRLARQNDVERRLHKRELAYLSADELRSMSDKSLGALRLAVANNEDLRDALRQSEDNSRPERKVLFYIAVYQHLRERIRQDIIRTDDPVEAIEEMEVELARLTEELTQREQRLAISSDSVASIIRKTIQREQNRIRMLNQGLSNISFGQVNGVRLNVKVRESHEILLAGLSEQQAQHKDLFESARYTFSEAMAKLFQRVNPHIDMGQRSPQVLGEELLDYRNYLELSVEVNRGSDGWLQAESGALSTGEAIGTGQSILLMVVQSWEEESRRLRSKDIVPCRLLFLDEAARLDAKSIATLFELCERLDMQLLIAAPENISPEKGTTYKLVRKVFKDHEHVHVVGLRGFAQTEKPKTAEQKFAEELAGELTE.

34–41 serves as a coordination point for ATP; it reads GGNGAGKS. Coiled coils occupy residues 302 to 450, 490 to 600, 781 to 806, 836 to 1109, and 1210 to 1239; these read LIEQ…LKAE, ARSE…RFES, RAAR…AKAS, EQAL…DLRT, and VEAI…ISSD. The interval 667–784 is flexible hinge; that stretch reads PGGSNDPRLK…AIPLFGRAAR (118 aa). Positions 1059-1080 are disordered; sequence QRRRDELQERLHTSRSRKSEYE.

This sequence belongs to the SMC family. MukB subfamily. In terms of assembly, homodimerization via its hinge domain. Binds to DNA via its C-terminal region. Interacts, and probably forms a ternary complex, with MukE and MukF via its C-terminal region. The complex formation is stimulated by calcium or magnesium. Interacts with tubulin-related protein FtsZ.

The protein resides in the cytoplasm. Its subcellular location is the nucleoid. Functionally, plays a central role in chromosome condensation, segregation and cell cycle progression. Functions as a homodimer, which is essential for chromosome partition. Involved in negative DNA supercoiling in vivo, and by this means organize and compact chromosomes. May achieve or facilitate chromosome segregation by condensation DNA from both sides of a centrally located replisome during cell division. This Vibrio cholerae serotype O1 (strain ATCC 39315 / El Tor Inaba N16961) protein is Chromosome partition protein MukB.